Here is a 199-residue protein sequence, read N- to C-terminus: GTP cyclohydrolase-2 (199 aa).

50–54 (RIHSE) provides a ligand contact to GTP. Positions 55, 66, and 68 each coordinate Zn(2+). GTP is bound by residues Gln71, 93 to 95 (EGR), and Thr115. Asp127 functions as the Proton acceptor in the catalytic mechanism. Arg129 functions as the Nucleophile in the catalytic mechanism. Residues Thr150 and Lys155 each coordinate GTP.

Belongs to the GTP cyclohydrolase II family. As to quaternary structure, homodimer. It depends on Zn(2+) as a cofactor.

The enzyme catalyses GTP + 4 H2O = 2,5-diamino-6-hydroxy-4-(5-phosphoribosylamino)-pyrimidine + formate + 2 phosphate + 3 H(+). It functions in the pathway cofactor biosynthesis; riboflavin biosynthesis; 5-amino-6-(D-ribitylamino)uracil from GTP: step 1/4. Functionally, catalyzes the conversion of GTP to 2,5-diamino-6-ribosylamino-4(3H)-pyrimidinone 5'-phosphate (DARP), formate and pyrophosphate. This is GTP cyclohydrolase-2 from Buchnera aphidicola subsp. Baizongia pistaciae (strain Bp).